The following is a 233-amino-acid chain: MINHLALNTPYFGILLSVIPFFLATILFEKTNRFFLFAPLFVSMVFGVAFLYLTGIPYKTYKIGGDIIYFFLEPATICFAIPLYKKREVLVKHWHRIIGGIGIGTVVALLIILTFAKLAQFANDVILSMLPQAATTAIALPVSAGIGGIKELTSLAVILNGVIIYALGNKFLKLFRITNPIARGLALGTSGHTLGVAPAKELGPVEESMASIALVLVGVVVVAVVPVFVAIFF.

A run of 7 helical transmembrane segments spans residues 9–29, 34–54, 63–83, 97–117, 121–141, 144–164, and 212–232; these read TPYF…ILFE, FFLF…LYLT, IGGD…AIPL, IIGG…TFAK, FAND…IALP, AGIG…GVII, and IALV…VAIF.

It belongs to the CidB/LrgB family. LrgB subfamily.

It is found in the cell membrane. Functionally, inhibits the expression or activity of extracellular murein hydrolases by interacting, possibly with LrgA, with the holin-like proteins CidA and/or CidB. The LrgAB and CidAB proteins may affect the proton motive force of the membrane. May be involved in programmed cell death (PCD), possibly triggering PCD in response to antibiotics and environmental stresses. The sequence is that of Antiholin-like protein LrgB from Staphylococcus aureus (strain Mu3 / ATCC 700698).